Reading from the N-terminus, the 319-residue chain is Porphobilinogen deaminase 1 (319 aa).

Cys-244 carries the S-(dipyrrolylmethanemethyl)cysteine modification.

The protein belongs to the HMBS family. Monomer. Dipyrromethane is required as a cofactor.

It catalyses the reaction 4 porphobilinogen + H2O = hydroxymethylbilane + 4 NH4(+). It participates in porphyrin-containing compound metabolism; protoporphyrin-IX biosynthesis; coproporphyrinogen-III from 5-aminolevulinate: step 2/4. Functionally, tetrapolymerization of the monopyrrole PBG into the hydroxymethylbilane pre-uroporphyrinogen in several discrete steps. The sequence is that of Porphobilinogen deaminase 1 (hemC1) from Streptomyces coelicolor (strain ATCC BAA-471 / A3(2) / M145).